The chain runs to 105 residues: Class II hydrophobin 1 (105 aa).

The signal sequence occupies residues Met1–Ala15. 4 disulfides stabilise this stretch: Cys38–Cys87, Cys48–Cys78, Cys49–Cys58, and Cys88–Cys99.

It belongs to the cerato-ulmin hydrophobin family. As to quaternary structure, homotetramer. Further self-assembles to form highly ordered films at water-air interfaces through intermolecular interactions.

The protein resides in the secreted. The protein localises to the cell wall. Its function is as follows. Aerial growth, conidiation, and dispersal of filamentous fungi in the environment rely upon a capability of their secreting small amphipathic proteins called hydrophobins (HPBs) with low sequence identity. Class I can self-assemble into an outermost layer of rodlet bundles on aerial cell surfaces, conferring cellular hydrophobicity that supports fungal growth, development and dispersal; whereas Class II form highly ordered films at water-air interfaces through intermolecular interactions but contribute nothing to the rodlet structure. HYD1 is a class II hydrophobin that plays roles in conidiation and cuticle-bypassing infection by regulating the transcripts of frequency clock protein frq, and velvet protein vosA, as well as primordium formation via the mitogen-activated protein kinase signaling pathway. Also participates in stress response, including tolerance of mycelia to osmotic and oxidative stresses, and conidia to high or low temperature. Acts as a defensive factor against Calcarisporium cordycipiticola infection, probably via the formation of a physical barrier to inhibit the pathogen infection owing to its hydrophobicity or binding to the effector of C.cordycipiticola, hindering the recognition of the pathogen. Finally, regulates the transcription of the AreA transcription factor at different developmental stages via a positive feedback loop. The sequence is that of Class II hydrophobin 1 from Cordyceps militaris (Caterpillar fungus).